The chain runs to 214 residues: Rac-like GTP-binding protein 2 (214 aa).

GTP is bound at residue 14-21 (GDGAVGKT). The Effector region signature appears at 36-44 (YIPTVFDNF). GTP contacts are provided by residues 61–65 (DTAGQ) and 119–122 (TKLD).

It belongs to the small GTPase superfamily. Rho family. In terms of processing, may be palmitoylated.

Its subcellular location is the cytoplasm. The protein resides in the membrane. In terms of biological role, inactive GDP-bound Rho GTPases reside in the cytosol, are found in a complex with Rho GDP-dissociation inhibitors (Rho GDIs), and are released from the GDI protein in order to translocate to membranes upon activation. This chain is Rac-like GTP-binding protein 2 (RAC2), found in Oryza sativa subsp. japonica (Rice).